The following is a 272-amino-acid chain: MWPAQLLSQLLPLWPLLLLPLSLPAQGSSHRSPPAPARPPCVRGGPSAPRHVCVWERAPPPSRSPRVPRSRRQVLPGTAPPATPSGFEEGPPSSQYPWAIVWGPTVSREDGGDPNSVNPGFLPLDYGFAAPHGLATPHPNSDSMRDDGDGLILGETPATLRPFLFGGRGEGVDPQLYVTITISIIIVLVATGIIFKFCWDRSQKRRRPSGQQGALRQEESQQPLTDLSPAGVTVLGAFGDSPTPTPDHEEPRGGPRPGMPQPKGAPAFQLNR.

A signal peptide spans 1 to 27 (MWPAQLLSQLLPLWPLLLLPLSLPAQG). Positions 25-93 (AQGSSHRSPP…PSGFEEGPPS (69 aa)) are disordered. Over 28 to 174 (SSHRSPPAPA…FGGRGEGVDP (147 aa)) the chain is Extracellular. O-linked (GalNAc...) threonine glycosylation occurs at threonine 136. A helical membrane pass occupies residues 175–195 (QLYVTITISIIIVLVATGIIF). The Cytoplasmic segment spans residues 196 to 272 (KFCWDRSQKR…KGAPAFQLNR (77 aa)). Residues 205 to 272 (RRRPSGQQGA…KGAPAFQLNR (68 aa)) form a disordered region. Residues 209–225 (SGQQGALRQEESQQPLT) are compositionally biased toward polar residues.

In terms of processing, O-glycosylation at Thr-136 is essential for recognition by PILRA.

The protein localises to the membrane. Acts as a ligand for PILRA in neuronal tissues, where it may be involved in immune regulation. This chain is PILR alpha-associated neural protein (Pianp), found in Rattus norvegicus (Rat).